Here is a 584-residue protein sequence, read N- to C-terminus: J protein JJJ2 (584 aa).

Residues 13–77 enclose the J domain; it reads TYYSILGLTS…DQKLRYDRDL (65 aa). Positions 216-312 are disordered; it reads YSEDPNSCLG…FSSGSHDSNL (97 aa). Residue serine 229 is modified to Phosphoserine. Residues 241-253 show a composition bias toward low complexity; sequence QQQQQQQQQQQQQ. A compositionally biased stretch (basic and acidic residues) spans 269-282; it reads KDNKESKRESRVSP. Residues 299 to 312 show a composition bias toward polar residues; it reads KTSTFSSGSHDSNL.

The protein localises to the cytoplasm. It localises to the nucleus. In Saccharomyces cerevisiae (strain YJM789) (Baker's yeast), this protein is J protein JJJ2 (JJJ2).